A 124-amino-acid polypeptide reads, in one-letter code: Large ribosomal subunit protein bL12 (124 aa).

This sequence belongs to the bacterial ribosomal protein bL12 family. Homodimer. Part of the ribosomal stalk of the 50S ribosomal subunit. Forms a multimeric L10(L12)X complex, where L10 forms an elongated spine to which 2 to 4 L12 dimers bind in a sequential fashion. Binds GTP-bound translation factors.

Its function is as follows. Forms part of the ribosomal stalk which helps the ribosome interact with GTP-bound translation factors. Is thus essential for accurate translation. In Phytoplasma australiense, this protein is Large ribosomal subunit protein bL12.